The chain runs to 288 residues: Energy-coupling factor transporter ATP-binding protein EcfA2 (288 aa).

The ABC transporter domain maps to 3-246 (IKLEQLGYCY…PDELVDLGLS (244 aa)). 40–47 (GHTGSGKS) contacts ATP.

The protein belongs to the ABC transporter superfamily. Energy-coupling factor EcfA family. In terms of assembly, forms a stable energy-coupling factor (ECF) transporter complex composed of 2 membrane-embedded substrate-binding proteins (S component), 2 ATP-binding proteins (A component) and 2 transmembrane proteins (T component).

The protein resides in the cell membrane. Functionally, ATP-binding (A) component of a common energy-coupling factor (ECF) ABC-transporter complex. Unlike classic ABC transporters this ECF transporter provides the energy necessary to transport a number of different substrates. This is Energy-coupling factor transporter ATP-binding protein EcfA2 from Listeria monocytogenes serotype 4b (strain F2365).